Consider the following 201-residue polypeptide: NADH-quinone oxidoreductase subunit B 1 (201 aa).

[4Fe-4S] cluster is bound by residues Cys80, Cys81, Cys145, and Cys175.

The protein belongs to the complex I 20 kDa subunit family. NDH-1 is composed of 14 different subunits. Subunits NuoB, C, D, E, F, and G constitute the peripheral sector of the complex. The cofactor is [4Fe-4S] cluster.

Its subcellular location is the cell inner membrane. The enzyme catalyses a quinone + NADH + 5 H(+)(in) = a quinol + NAD(+) + 4 H(+)(out). NDH-1 shuttles electrons from NADH, via FMN and iron-sulfur (Fe-S) centers, to quinones in the respiratory chain. The immediate electron acceptor for the enzyme in this species is believed to be ubiquinone. Couples the redox reaction to proton translocation (for every two electrons transferred, four hydrogen ions are translocated across the cytoplasmic membrane), and thus conserves the redox energy in a proton gradient. The sequence is that of NADH-quinone oxidoreductase subunit B 1 from Rhodopseudomonas palustris (strain BisB18).